A 376-amino-acid polypeptide reads, in one-letter code: MTISKFVQIRRDLHQIPELGFQEWKTQQYILNYIETLPNEHIEVKTWKTGVIVKVKGKNPVKTIGYRADMDGLPIVEETGYEFASTHEGMMHACGHDFHTTIGLGLLTATVNDRIDDDLVFLFQPAEEGPGGALPMLESEELKEWKPNMILGLHIAPEYPVGTIATKEGLLFANTSELYIDLKGKGGHAAYPHMANDMIVAASHLVTQLQSVISRNVNPLDSAVITIGKITGGTVQNIIAEKSRLEGTIRTLSVESMKRVKDRIEAIVAGIEAAFQCEAVIDYGAMYHQVYNHEALTKEFMEFASKDTNMNVVTCKEAMTGEDFGYMLRDIPGFMFWLGVDSEYGLHHAKLKPNEAAIDRAIEFLNQYVKWKGNRR.

The active site involves D69. E128 serves as the catalytic Proton acceptor.

This sequence belongs to the peptidase M20A family. N-acetyldiaminopimelate deacetylase subfamily.

The catalysed reaction is N-acetyl-(2S,6S)-2,6-diaminopimelate + H2O = (2S,6S)-2,6-diaminopimelate + acetate. It functions in the pathway amino-acid biosynthesis; L-lysine biosynthesis via DAP pathway; LL-2,6-diaminopimelate from (S)-tetrahydrodipicolinate (acetylase route): step 3/3. Its function is as follows. Catalyzes the conversion of N-acetyl-diaminopimelate to diaminopimelate and acetate. This Bacillus cytotoxicus (strain DSM 22905 / CIP 110041 / 391-98 / NVH 391-98) protein is N-acetyldiaminopimelate deacetylase.